Reading from the N-terminus, the 128-residue chain is Small ribosomal subunit protein uS11 (128 aa).

The protein belongs to the universal ribosomal protein uS11 family. As to quaternary structure, part of the 30S ribosomal subunit. Interacts with proteins S7 and S18. Binds to IF-3.

Located on the platform of the 30S subunit, it bridges several disparate RNA helices of the 16S rRNA. Forms part of the Shine-Dalgarno cleft in the 70S ribosome. The polypeptide is Small ribosomal subunit protein uS11 (Wolbachia pipientis subsp. Culex pipiens (strain wPip)).